The primary structure comprises 216 residues: Kynurenine formamidase (216 aa).

Tryptophan 25 is a binding site for substrate. Zn(2+) contacts are provided by histidine 55, histidine 59, and aspartate 61. The Proton donor/acceptor role is filled by histidine 65. Histidine 167 and glutamate 179 together coordinate Zn(2+).

This sequence belongs to the Cyclase 1 superfamily. KynB family. Homodimer. The cofactor is Zn(2+).

It catalyses the reaction N-formyl-L-kynurenine + H2O = L-kynurenine + formate + H(+). The protein operates within amino-acid degradation; L-tryptophan degradation via kynurenine pathway; L-kynurenine from L-tryptophan: step 2/2. Its function is as follows. Catalyzes the hydrolysis of N-formyl-L-kynurenine to L-kynurenine, the second step in the kynurenine pathway of tryptophan degradation. The polypeptide is Kynurenine formamidase (Cupriavidus necator (strain ATCC 17699 / DSM 428 / KCTC 22496 / NCIMB 10442 / H16 / Stanier 337) (Ralstonia eutropha)).